Here is a 453-residue protein sequence, read N- to C-terminus: mRNA cleavage and polyadenylation factor CLP1 (453 aa).

Residues Glu31, Lys70, and 146-151 (NSGKTS) each bind ATP.

The protein belongs to the Clp1 family. Clp1 subfamily. In terms of assembly, component of a pre-mRNA cleavage factor complex. Interacts directly with PCF11.

Its subcellular location is the nucleus. Required for endonucleolytic cleavage during polyadenylation-dependent pre-mRNA 3'-end formation. This chain is mRNA cleavage and polyadenylation factor CLP1, found in Scheffersomyces stipitis (strain ATCC 58785 / CBS 6054 / NBRC 10063 / NRRL Y-11545) (Yeast).